A 309-amino-acid chain; its full sequence is Porphobilinogen deaminase (309 aa).

At C241 the chain carries S-(dipyrrolylmethanemethyl)cysteine.

It belongs to the HMBS family. In terms of assembly, monomer. It depends on dipyrromethane as a cofactor.

The enzyme catalyses 4 porphobilinogen + H2O = hydroxymethylbilane + 4 NH4(+). It participates in porphyrin-containing compound metabolism; protoporphyrin-IX biosynthesis; coproporphyrinogen-III from 5-aminolevulinate: step 2/4. Functionally, tetrapolymerization of the monopyrrole PBG into the hydroxymethylbilane pre-uroporphyrinogen in several discrete steps. The protein is Porphobilinogen deaminase of Desulforudis audaxviator (strain MP104C).